The chain runs to 226 residues: Leucyl/phenylalanyl-tRNA--protein transferase (226 aa).

This sequence belongs to the L/F-transferase family.

The protein resides in the cytoplasm. It carries out the reaction N-terminal L-lysyl-[protein] + L-leucyl-tRNA(Leu) = N-terminal L-leucyl-L-lysyl-[protein] + tRNA(Leu) + H(+). It catalyses the reaction N-terminal L-arginyl-[protein] + L-leucyl-tRNA(Leu) = N-terminal L-leucyl-L-arginyl-[protein] + tRNA(Leu) + H(+). The enzyme catalyses L-phenylalanyl-tRNA(Phe) + an N-terminal L-alpha-aminoacyl-[protein] = an N-terminal L-phenylalanyl-L-alpha-aminoacyl-[protein] + tRNA(Phe). In terms of biological role, functions in the N-end rule pathway of protein degradation where it conjugates Leu, Phe and, less efficiently, Met from aminoacyl-tRNAs to the N-termini of proteins containing an N-terminal arginine or lysine. This is Leucyl/phenylalanyl-tRNA--protein transferase from Salinibacter ruber (strain DSM 13855 / M31).